The sequence spans 439 residues: MAMLSDTIYALSSGAPPSGVSVVRVSGPLTRDILVKLVGSVPAARHVSHRTIRTRNNQPIDSGLVLFFPAPNSFTGEDVAELQIHGSRAVLAALFHALGDIPGVRMAVEGEFSRRAFENGKLDLVEVEGLADLIGAETEMQRRLAVEHSAGGLSAIYDSWAERLTRARALVEAELDFPEEDDVPGSVSDAVWADMAKLRSDIGDHLAAASAGEIIRDGFKVVIAGAPNAGKSSLLNALARRDVAIVTEIAGTTRDVLQVDLDIDGYLIKLFDTAGLREADDKVEMEGVRRARVALRDADLVLLLVDMTKPLIPDDLEQSSPHVTVGTKKDLTEVNSGRYDLQISTATGDGLPELRRLIGDIVERRFAGLSMAIPSRQRHKDSLAKCLAALDVALSQTDVNLELRTEQLRIAAEYLGRITGRVDVEQLLGVIFSEFCIGK.

R24, E81, and K121 together coordinate (6S)-5-formyl-5,6,7,8-tetrahydrofolate. A TrmE-type G domain is found at 218 to 363; that stretch reads GFKVVIAGAP…LRRLIGDIVE (146 aa). Residue N228 participates in K(+) binding. GTP contacts are provided by residues 228-233, 247-253, and 272-275; these read NAGKSS, TEIAGTT, and DTAG. S232 contacts Mg(2+). Residues T247, I249, and T252 each coordinate K(+). T253 serves as a coordination point for Mg(2+). K439 contacts (6S)-5-formyl-5,6,7,8-tetrahydrofolate.

It belongs to the TRAFAC class TrmE-Era-EngA-EngB-Septin-like GTPase superfamily. TrmE GTPase family. In terms of assembly, homodimer. Heterotetramer of two MnmE and two MnmG subunits. K(+) is required as a cofactor.

It localises to the cytoplasm. Functionally, exhibits a very high intrinsic GTPase hydrolysis rate. Involved in the addition of a carboxymethylaminomethyl (cmnm) group at the wobble position (U34) of certain tRNAs, forming tRNA-cmnm(5)s(2)U34. The chain is tRNA modification GTPase MnmE from Rhizobium johnstonii (strain DSM 114642 / LMG 32736 / 3841) (Rhizobium leguminosarum bv. viciae).